Reading from the N-terminus, the 313-residue chain is Olfactory receptor 5H15 (313 aa).

Residues 1-28 (MEEENATLLTEFVLTGFLYQPQWKIPLF) are Extracellular-facing. Asn5 carries N-linked (GlcNAc...) asparagine glycosylation. A helical membrane pass occupies residues 29–49 (LAFLVIYLITIMGNLGLIAVI). Residues 50–56 (WKDPHLH) lie on the Cytoplasmic side of the membrane. A helical membrane pass occupies residues 57 to 77 (IPMYLLLGNLAFVDAWISSTV). Residues 78-98 (TPKMLNNFLAKSKMISLSECK) are Extracellular-facing. A disulfide bridge connects residues Cys97 and Cys179. Residues 99–119 (IQFFSIAIGVTTECFLLATMA) traverse the membrane as a helical segment. Topologically, residues 120–143 (YDRYVAICKPLLYPAIMTNGLCIR) are cytoplasmic. The helical transmembrane segment at 144 to 164 (LLILSYIAGILHALIHEGFLF) threads the bilayer. The Extracellular segment spans residues 165–195 (RLTFCNSNIVHHIYCDTIPLSKISCTDSSIN). The helical transmembrane segment at 196–216 (FLMVFIFSGSIQVFSIVTILI) threads the bilayer. The Cytoplasmic segment spans residues 217–240 (SYTFVLFTVLEKKSDKGVRKAFST). A helical membrane pass occupies residues 241–261 (CGAHLFSVCLYYGPLLLMYVG). At 262–271 (PASPQADGQN) the chain is on the extracellular side. A helical membrane pass occupies residues 272 to 292 (MVEPLFYTVIIPLLNPIIYSL). Over 293–313 (RNKQVIVSFIKMLKRNVKVSY) the chain is Cytoplasmic.

It belongs to the G-protein coupled receptor 1 family.

The protein resides in the cell membrane. Functionally, odorant receptor. The sequence is that of Olfactory receptor 5H15 (OR5H15) from Homo sapiens (Human).